Consider the following 493-residue polypeptide: 3-ketoacyl-CoA synthase 16 (493 aa).

Positions 1–35 (MDYPMKKVKIFFNYLMAHRFKLCFLPLMVAIAVEA) are cleaved as a signal peptide. Residues 52–74 (NNHTSLTMFFLYLALGSTLYLMT) traverse the membrane as a helical segment. The FAE domain maps to 71–366 (YLMTRPKPVY…FFVRFVKKKF (296 aa)). Active-site residues include Cys221, His300, His384, His388, His417, and Asn421.

The protein belongs to the thiolase-like superfamily. Chalcone/stilbene synthases family. Expressed in siliques.

The protein resides in the membrane. It carries out the reaction a very-long-chain acyl-CoA + malonyl-CoA + H(+) = a very-long-chain 3-oxoacyl-CoA + CO2 + CoA. It functions in the pathway lipid metabolism; fatty acid biosynthesis. The chain is 3-ketoacyl-CoA synthase 16 from Arabidopsis thaliana (Mouse-ear cress).